Consider the following 273-residue polypeptide: Hydroxyethylthiazole kinase (273 aa).

Met49 is a substrate binding site. 2 residues coordinate ATP: Arg125 and Thr171. Substrate is bound at residue Gly198.

It belongs to the Thz kinase family. Requires Mg(2+) as cofactor.

The catalysed reaction is 5-(2-hydroxyethyl)-4-methylthiazole + ATP = 4-methyl-5-(2-phosphooxyethyl)-thiazole + ADP + H(+). It participates in cofactor biosynthesis; thiamine diphosphate biosynthesis; 4-methyl-5-(2-phosphoethyl)-thiazole from 5-(2-hydroxyethyl)-4-methylthiazole: step 1/1. In terms of biological role, catalyzes the phosphorylation of the hydroxyl group of 4-methyl-5-beta-hydroxyethylthiazole (THZ). This chain is Hydroxyethylthiazole kinase, found in Desulforudis audaxviator (strain MP104C).